The primary structure comprises 582 residues: Putative transcriptional regulator HVO_1357 (582 aa).

In terms of domain architecture, Response regulatory spans valine 19–leucine 129. Position 67 is a 4-aspartylphosphate (aspartate 67). Residues leucine 165 to valine 203 adopt a coiled-coil conformation. Residues leucine 517 to glutamate 569 enclose the HTH bat-type domain.

May be part of a signal-dependent gene regulation cascade that is relevant to swimming motility. May be involved in the transcription regulation of target genes. This Haloferax volcanii (strain ATCC 29605 / DSM 3757 / JCM 8879 / NBRC 14742 / NCIMB 2012 / VKM B-1768 / DS2) (Halobacterium volcanii) protein is Putative transcriptional regulator HVO_1357.